A 403-amino-acid polypeptide reads, in one-letter code: DNA replication and repair protein RecF (403 aa).

ATP is bound at residue glycine 30–threonine 37.

The protein belongs to the RecF family.

The protein localises to the cytoplasm. The RecF protein is involved in DNA metabolism; it is required for DNA replication and normal SOS inducibility. RecF binds preferentially to single-stranded, linear DNA. It also seems to bind ATP. The protein is DNA replication and repair protein RecF of Bifidobacterium adolescentis (strain ATCC 15703 / DSM 20083 / NCTC 11814 / E194a).